The primary structure comprises 195 residues: Nicotinamide riboside kinase 1 (195 aa).

10–18 is a binding site for ATP; it reads GVTNGGKTT. 2 residues coordinate Mg(2+): T17 and D36. The Proton acceptor role is filled by D36. Substrate contacts are provided by residues 36–39 and 55–56; these read DDFF and YD. An ATP-binding site is contributed by R128. Residues R129 and 134–135 contribute to the substrate site; that span reads YE. ATP is bound by residues 132–134 and 172–174; these read RVY and RSE.

Belongs to the uridine kinase family. NRK subfamily. Monomer.

The enzyme catalyses beta-nicotinamide D-riboside + ATP = beta-nicotinamide D-ribonucleotide + ADP + H(+). It catalyses the reaction beta-D-ribosylnicotinate + ATP = nicotinate beta-D-ribonucleotide + ADP + H(+). Its pathway is cofactor biosynthesis; NAD(+) biosynthesis. Its function is as follows. Catalyzes the phosphorylation of nicotinamide riboside (NR) and nicotinic acid riboside (NaR) to form nicotinamide mononucleotide (NMN) and nicotinic acid mononucleotide (NaMN). The polypeptide is Nicotinamide riboside kinase 1 (Nmrk1) (Mus musculus (Mouse)).